The primary structure comprises 697 residues: Probable glutamine--tRNA ligase (697 aa).

A 'HIGH' region motif is present at residues 204–214 (PEPNGILHIGH). ATP-binding positions include 205 to 207 (EPN) and 211 to 217 (HIGHAKA). Positions 237 and 386 each coordinate L-glutamine. Residues Thr405, 434–435 (RL), and 442–444 (LSK) contribute to the ATP site. Positions 441-445 (VLSKR) match the 'KMSKS' region motif.

The protein belongs to the class-I aminoacyl-tRNA synthetase family.

It carries out the reaction tRNA(Gln) + L-glutamine + ATP = L-glutaminyl-tRNA(Gln) + AMP + diphosphate. The polypeptide is Probable glutamine--tRNA ligase (Encephalitozoon cuniculi (strain GB-M1) (Microsporidian parasite)).